The sequence spans 180 residues: Superoxide dismutase [Cu-Zn] (180 aa).

An N-terminal signal peptide occupies residues 1–19 (MFMNLLTQVSNAIFPQVEA). Cu cation contacts are provided by histidine 68, histidine 70, and histidine 85. Cysteine 79 and cysteine 171 are disulfide-bonded. Residues histidine 85, histidine 93, histidine 102, and aspartate 105 each contribute to the Zn(2+) site. Histidine 142 lines the Cu cation pocket.

The protein belongs to the Cu-Zn superoxide dismutase family. As to quaternary structure, homodimer. Cu cation serves as cofactor. It depends on Zn(2+) as a cofactor.

It is found in the cytoplasm. It carries out the reaction 2 superoxide + 2 H(+) = H2O2 + O2. The insertion of copper which activates the protein requires glutathione. This is independent of copper chaperone for SOD1 (CCS), which activates orthologs. Protects cells against oxidative stress by converting superoxide radicals to hydrogen peroxide. Required for normal brood size. May be involved in regulating mpk-1 phosphorylation downstream of phosphatase ptp-2 during oocyte maturation. The sequence is that of Superoxide dismutase [Cu-Zn] (sod-1) from Caenorhabditis elegans.